The chain runs to 212 residues: Transcriptional regulator GfcR (212 aa).

A disordered region spans residues 38 to 60 (LVERSGTGTEPDTSDDGGPHDIH).

This sequence belongs to the purine/pyrimidine phosphoribosyltransferase family. GfcR subfamily.

DNA-binding transcriptional regulator that functions as a regulator of central sugar catabolic pathways. This is Transcriptional regulator GfcR from Haloarcula marismortui (strain ATCC 43049 / DSM 3752 / JCM 8966 / VKM B-1809) (Halobacterium marismortui).